The following is a 142-amino-acid chain: Glia maturation factor gamma (142 aa).

Residue Ser-2 is modified to N-acetylserine. Positions 4–139 (SLVVCDVDPE…NETWLKEKLA (136 aa)) constitute an ADF-H domain.

It belongs to the actin-binding proteins ADF family. GMF subfamily. As to expression, expressed in rat thymus, testis, and spleen. Is present predominantly in proliferative and differentiative organs.

This is Glia maturation factor gamma (Gmfg) from Rattus norvegicus (Rat).